Consider the following 320-residue polypeptide: MQTRNTFSWIKEQITRSISASLMIYIITRTSISNAYPIFAQQGYENPREATGRIVCANCHLANKPVDIEVPQAVLPDTVFEAVVRIPYDTQLKQVLANGKKGGLNVGAVLILPEGFELAPPDRISPEIKEKMGNLSFQSYRPNQKNILVIGPVPGQKYSEITFPILSPDPATKKDIHFLKYPIYVGGNRGRGQIYPDGSKSNNTVYNATASGIVSKILRKEKGGYEITIADASDGRQVVDIIPPGPELLVSEGESIKLDQPLTSNPNVGGFGQGDAEIVLQDPLRVQGLLFFFAAVILAQIFLVLKKKQFEKVQLSEMNF.

The signal sequence occupies residues 1 to 35; sequence MQTRNTFSWIKEQITRSISASLMIYIITRTSISNA. 4 residues coordinate heme: Tyr36, Cys56, Cys59, and His60. A helical transmembrane segment spans residues 286-306; the sequence is VQGLLFFFAAVILAQIFLVLK.

This sequence belongs to the cytochrome f family. The 4 large subunits of the cytochrome b6-f complex are cytochrome b6, subunit IV (17 kDa polypeptide, petD), cytochrome f and the Rieske protein, while the 4 small subunits are PetG, PetL, PetM and PetN. The complex functions as a dimer. Heme serves as cofactor.

The protein localises to the plastid. It is found in the chloroplast thylakoid membrane. In terms of biological role, component of the cytochrome b6-f complex, which mediates electron transfer between photosystem II (PSII) and photosystem I (PSI), cyclic electron flow around PSI, and state transitions. This is Cytochrome f from Helianthus annuus (Common sunflower).